Here is a 321-residue protein sequence, read N- to C-terminus: Zinc finger protein 524 (321 aa).

Polar residues-rich tracts occupy residues 1-14 (MDNP…STLS) and 39-48 (ATTSNRTLKS). Disordered stretches follow at residues 1 to 80 (MDNP…DLLL) and 86 to 105 (VPYT…SGSK). A DNA-binding region (a.T hook) is located at residues 49 to 59 (SLPRKRGRPPR). 4 consecutive C2H2-type zinc fingers follow at residues 109–131 (HFCP…SISH), 137–159 (HVCK…CNIH), 165–187 (FRCV…HRIH), and 193–216 (YQCP…KRKH). Positions 248–321 (GVQEESPEGK…PGAIGHPPVD (74 aa)) are disordered. Residues 262 to 271 (PISSTTSPLS) are compositionally biased toward polar residues. The span at 274–285 (TAGGSAGAGRGQ) shows a compositional bias: gly residues.

It belongs to the krueppel C2H2-type zinc-finger protein family.

It is found in the nucleus. In terms of biological role, may be involved in transcriptional regulation. The sequence is that of Zinc finger protein 524 (Znf524) from Mus musculus (Mouse).